Consider the following 190-residue polypeptide: Homeobox protein SEBOX (190 aa).

The segment covering 1–11 has biased composition (low complexity); it reads MPSPVDASSAD. Disordered regions lie at residues 1–24 and 82–161; these read MPSPVDASSADGGSGLGSHRRKRT and ILSP…VHPS. Positions 19–78 form a DNA-binding region, homeobox; sequence HRRKRTTFSKGQLLELERAFAAWPYPNISTHEHLAWVTCLPEAKVQVWFQKRWAKIIKNR. Polar residues predominate over residues 89-100; it reads CPQSSCSLPDTL.

This sequence belongs to the paired homeobox family.

The protein resides in the nucleus. In terms of biological role, probable transcription factor involved in the control of specification of mesoderm and endoderm. The sequence is that of Homeobox protein SEBOX (SEBOX) from Homo sapiens (Human).